The following is a 372-amino-acid chain: MNVTQQSEKEAVIKLTGISKSFDGKEVISNFDLDVNHGEFLTILGPSGCGKTTVLRMIAGFETADAGTILLDSTDVTSVPAEQRHVNTVFQSYALFPHMTVFENVAFGLRMQKVAESEIEPRVTEALQMVRLAQMANRKPHQLSGGQQQRIAIARAVVNKPKVLLLDESLSALDYKLRKQMQIELKQLQRQLGITFIFVTHDQEEALSMSDRIIVMRDGVIEQDGTPREIYEEPKNLFVARFIGEINVFAATVQERLDEKRIKAEIEDTSAIVYCDLDVAPGDKVKVLLRPEDLRLEEIKESDNKGITGYVRERTYKGMTLDSVLELDSGMRVMISEFFNEDDPDVDHSLGQKVAITWVESWEVVLADEQEV.

The region spanning 13-243 is the ABC transporter domain; that stretch reads IKLTGISKSF…PKNLFVARFI (231 aa). Residue 45–52 participates in ATP binding; sequence GPSGCGKT.

It belongs to the ABC transporter superfamily. Spermidine/putrescine importer (TC 3.A.1.11.1) family. In terms of assembly, the complex is composed of two ATP-binding proteins (PotA), two transmembrane proteins (PotB and PotC) and a solute-binding protein (PotD).

The protein localises to the cell inner membrane. It catalyses the reaction ATP + H2O + polyamine-[polyamine-binding protein]Side 1 = ADP + phosphate + polyamineSide 2 + [polyamine-binding protein]Side 1.. Its function is as follows. Part of the ABC transporter complex PotABCD involved in spermidine/putrescine import. Responsible for energy coupling to the transport system. The polypeptide is Spermidine/putrescine import ATP-binding protein PotA (Aliivibrio fischeri (strain ATCC 700601 / ES114) (Vibrio fischeri)).